Reading from the N-terminus, the 1012-residue chain is Cellulose synthase-like protein D5 (1012 aa).

The tract at residues 1 to 81 is disordered; it reads MSVDYANYTV…ARVPAPSSNK (81 aa). Over residues 20 to 37 the composition is skewed to low complexity; sequence PSGGAPPAAPSAGGARPG. Residues 57 to 69 show a composition bias toward basic and acidic residues; sequence GGGDDGAKMDRRL. 2 helical membrane-spanning segments follow: residues 150 to 170 and 180 to 200; these read ILSP…LFLV and ALWL…SWLL. Aspartate 280 is a catalytic residue. Residues 597–620 form a disordered region; that stretch reads PRQGSEAMPGAGGGRSGGGSVGGD. Over residues 606–618 the composition is skewed to gly residues; it reads GAGGGRSGGGSVG. Aspartate 717 is a catalytic residue. 6 consecutive transmembrane segments (helical) span residues 799–819, 825–845, 871–891, 914–934, 948–968, and 978–998; these read LFLI…QFIV, TFLS…LLEV, LAAV…SFTL, SLFI…VVGV, LLGG…FAKG, and TIVY…WITI.

This sequence belongs to the glycosyltransferase 2 family. Plant cellulose synthase-like D subfamily.

The protein localises to the golgi apparatus membrane. Thought to be a Golgi-localized beta-glycan synthase that polymerize the backbones of noncellulosic polysaccharides (hemicelluloses) of plant cell wall. The chain is Cellulose synthase-like protein D5 (CSLD5) from Oryza sativa subsp. japonica (Rice).